A 282-amino-acid polypeptide reads, in one-letter code: Digeranylgeranylglyceryl phosphate synthase (282 aa).

Transmembrane regions (helical) follow at residues 15–35 (VIGA…WYLE), 36–56 (LKGI…GYVI), 81–100 (VNKA…ALSI), 104–121 (IYAL…IYYA), 131–151 (GNLL…LAFF), 159–179 (IIIP…VKGI), 201–221 (KSWR…PLPF), 222–242 (FIGF…PFTI), and 260–280 (YLKI…LPFF).

This sequence belongs to the UbiA prenyltransferase family. DGGGP synthase subfamily. It depends on Mg(2+) as a cofactor. Requires Ca(2+) as cofactor.

It is found in the cell membrane. It catalyses the reaction sn-3-O-(geranylgeranyl)glycerol 1-phosphate + (2E,6E,10E)-geranylgeranyl diphosphate = 2,3-bis-O-(geranylgeranyl)-sn-glycerol 1-phosphate + diphosphate. It functions in the pathway membrane lipid metabolism; glycerophospholipid metabolism. With respect to regulation, inhibited by EDTA in vitro. Its function is as follows. Prenyltransferase that catalyzes the transfer of the geranylgeranyl moiety of geranylgeranyl diphosphate (GGPP) to the C2 hydroxyl of (S)-3-O-geranylgeranylglyceryl phosphate (GGGP). This reaction is the second ether-bond-formation step in the biosynthesis of archaeal membrane lipids. Cannot use other prenyl donors, i.e. farnesyl diphosphate (FPP) and phytyl diphosphate. Moreover, 4-hydroxybenzoate, 1,4-dihydroxy 2-naphthoate, homogentisate, and alpha-glycerophosphate do not function as prenyl acceptor substrates. The protein is Digeranylgeranylglyceryl phosphate synthase (ubiA-2) of Saccharolobus solfataricus (strain ATCC 35092 / DSM 1617 / JCM 11322 / P2) (Sulfolobus solfataricus).